The following is a 386-amino-acid chain: MILTGAASTFPIVARVLNAMNRRMYAATTLSSAKSISAESLNLRSDSNSEAAHGASESETRVSLRKKRIKQDDLEPVKKCSARETKARKDMCGLPDIEDSPYKKTNGTASSRTRKLNSYIKSTEASPSASSIKTAGLGIPPENWEKVLEGIRKMKPSEEAPVNAVECDRTGSFLPPKERRFYVLIGTLLSSQTKEHITGAAVERLHQNGLLTPEAIDKADESTIKELIYPVGFYTRKATNVKKVAKICLMEYDGDIPRTLEELLSLPGVGPKIAHLVLHVAWNDVQGICVDTHVHRICNRLGWVSKPGTKQKTSSPEETRVALQQWLPKGEWVAINFLLVGFGQTICTPLRPHCGTCSITEICPSAFKETPSTSSKLKKSIKSKKL.

The N-terminal 50 residues, 1-50, are a transit peptide targeting the chloroplast; the sequence is MILTGAASTFPIVARVLNAMNRRMYAATTLSSAKSISAESLNLRSDSNSE. Residues 44-66 are disordered; it reads RSDSNSEAAHGASESETRVSLRK. The HhH domain occupies 252 to 278; the sequence is YDGDIPRTLEELLSLPGVGPKIAHLVL. Residue Lys-272 is the Nucleophile; for N-glycosylase activity of the active site. [4Fe-4S] cluster is bound by residues Cys-347, Cys-354, Cys-357, and Cys-363.

Belongs to the Nth/MutY family. [4Fe-4S] cluster serves as cofactor.

Its subcellular location is the plastid. The protein localises to the chloroplast stroma. It localises to the chloroplast nucleoid. The enzyme catalyses 2'-deoxyribonucleotide-(2'-deoxyribose 5'-phosphate)-2'-deoxyribonucleotide-DNA = a 3'-end 2'-deoxyribonucleotide-(2,3-dehydro-2,3-deoxyribose 5'-phosphate)-DNA + a 5'-end 5'-phospho-2'-deoxyribonucleoside-DNA + H(+). Its function is as follows. Bifunctional DNA N-glycosylase with associated apurinic/apyrimidinic (AP) lyase function that catalyzes the first step in base excision repair (BER), the primary repair pathway for the repair of oxidative DNA damage. The DNA N-glycosylase activity releases the damaged DNA base from DNA by cleaving the N-glycosidic bond, leaving an AP site. The AP lyase activity cleaves the phosphodiester bond 3' to the AP site by a beta-elimination. Primarily recognizes and repairs oxidative base damage of pyrimidines. This is Endonuclease III homolog 2, chloroplastic (NTH2) from Arabidopsis thaliana (Mouse-ear cress).